A 320-amino-acid polypeptide reads, in one-letter code: Beta-ketoacyl-[acyl-carrier-protein] synthase III (320 aa).

Residues Cys114 and His247 contribute to the active site. The ACP-binding stretch occupies residues 248 to 252 (QANRR). The active site involves Asn277.

This sequence belongs to the thiolase-like superfamily. FabH family. Homodimer.

It is found in the cytoplasm. The catalysed reaction is malonyl-[ACP] + acetyl-CoA + H(+) = 3-oxobutanoyl-[ACP] + CO2 + CoA. It participates in lipid metabolism; fatty acid biosynthesis. Functionally, catalyzes the condensation reaction of fatty acid synthesis by the addition to an acyl acceptor of two carbons from malonyl-ACP. Catalyzes the first condensation reaction which initiates fatty acid synthesis and may therefore play a role in governing the total rate of fatty acid production. Possesses both acetoacetyl-ACP synthase and acetyl transacylase activities. Its substrate specificity determines the biosynthesis of branched-chain and/or straight-chain of fatty acids. This Neisseria meningitidis serogroup B (strain ATCC BAA-335 / MC58) protein is Beta-ketoacyl-[acyl-carrier-protein] synthase III.